Here is a 130-residue protein sequence, read N- to C-terminus: Small ribosomal subunit protein uS8y (130 aa).

The protein belongs to the universal ribosomal protein uS8 family.

This chain is Small ribosomal subunit protein uS8y (RPS15AC), found in Arabidopsis thaliana (Mouse-ear cress).